Reading from the N-terminus, the 433-residue chain is Homoserine O-acetyltransferase (433 aa).

Residues 41–385 (NVVLVCHALT…HGHDAFLVEP (345 aa)) form the AB hydrolase-1 domain. A disordered region spans residues 55-74 (VARSPAPERNEGTRGAGQAG). The active-site Nucleophile is the Ser-166. Residue Arg-237 participates in substrate binding. Active-site residues include Asp-345 and His-378. Asp-379 provides a ligand contact to substrate. The segment at 403–433 (RAVSDDGGGGGNDSARPERDHAPVHASLFKG) is disordered.

It belongs to the AB hydrolase superfamily. MetX family. Homodimer.

It is found in the cytoplasm. The catalysed reaction is L-homoserine + acetyl-CoA = O-acetyl-L-homoserine + CoA. The protein operates within amino-acid biosynthesis; L-methionine biosynthesis via de novo pathway; O-acetyl-L-homoserine from L-homoserine: step 1/1. Its function is as follows. Transfers an acetyl group from acetyl-CoA to L-homoserine, forming acetyl-L-homoserine. The chain is Homoserine O-acetyltransferase from Halorubrum lacusprofundi (strain ATCC 49239 / DSM 5036 / JCM 8891 / ACAM 34).